A 191-amino-acid polypeptide reads, in one-letter code: dTTP/UTP pyrophosphatase (191 aa).

D69 serves as the catalytic Proton acceptor.

This sequence belongs to the Maf family. YhdE subfamily. It depends on a divalent metal cation as a cofactor.

It localises to the cytoplasm. The catalysed reaction is dTTP + H2O = dTMP + diphosphate + H(+). It carries out the reaction UTP + H2O = UMP + diphosphate + H(+). Functionally, nucleoside triphosphate pyrophosphatase that hydrolyzes dTTP and UTP. May have a dual role in cell division arrest and in preventing the incorporation of modified nucleotides into cellular nucleic acids. The chain is dTTP/UTP pyrophosphatase from Pelotomaculum thermopropionicum (strain DSM 13744 / JCM 10971 / SI).